Reading from the N-terminus, the 308-residue chain is Aspartate carbamoyltransferase catalytic subunit (308 aa).

Carbamoyl phosphate is bound by residues arginine 55 and threonine 56. Lysine 83 contacts L-aspartate. The carbamoyl phosphate site is built by arginine 105, histidine 133, and glutamine 136. 2 residues coordinate L-aspartate: arginine 166 and arginine 220. 2 residues coordinate carbamoyl phosphate: glycine 261 and proline 262.

Belongs to the aspartate/ornithine carbamoyltransferase superfamily. ATCase family. Heterododecamer (2C3:3R2) of six catalytic PyrB chains organized as two trimers (C3), and six regulatory PyrI chains organized as three dimers (R2).

It carries out the reaction carbamoyl phosphate + L-aspartate = N-carbamoyl-L-aspartate + phosphate + H(+). Its pathway is pyrimidine metabolism; UMP biosynthesis via de novo pathway; (S)-dihydroorotate from bicarbonate: step 2/3. Functionally, catalyzes the condensation of carbamoyl phosphate and aspartate to form carbamoyl aspartate and inorganic phosphate, the committed step in the de novo pyrimidine nucleotide biosynthesis pathway. In Chlorobaculum tepidum (strain ATCC 49652 / DSM 12025 / NBRC 103806 / TLS) (Chlorobium tepidum), this protein is Aspartate carbamoyltransferase catalytic subunit.